The primary structure comprises 81 residues: Cytochrome b559 subunit alpha (81 aa).

A helical transmembrane segment spans residues 21 to 35 (VIHALTIPALFLAGW). Histidine 23 lines the heme pocket.

The protein belongs to the PsbE/PsbF family. In terms of assembly, heterodimer of an alpha subunit and a beta subunit. PSII is composed of 1 copy each of membrane proteins PsbA, PsbB, PsbC, PsbD, PsbE, PsbF, PsbH, PsbI, PsbJ, PsbK, PsbL, PsbM, PsbT, PsbX, PsbY, PsbZ, Psb30/Ycf12, peripheral proteins PsbO, CyanoQ (PsbQ), PsbU, PsbV and a large number of cofactors. It forms dimeric complexes. Heme b is required as a cofactor.

The protein resides in the cellular thylakoid membrane. Its function is as follows. This b-type cytochrome is tightly associated with the reaction center of photosystem II (PSII). PSII is a light-driven water:plastoquinone oxidoreductase that uses light energy to abstract electrons from H(2)O, generating O(2) and a proton gradient subsequently used for ATP formation. It consists of a core antenna complex that captures photons, and an electron transfer chain that converts photonic excitation into a charge separation. The protein is Cytochrome b559 subunit alpha of Synechococcus sp. (strain JA-3-3Ab) (Cyanobacteria bacterium Yellowstone A-Prime).